We begin with the raw amino-acid sequence, 450 residues long: 3',5'-cyclic-AMP phosphodiesterase 7B (450 aa).

In terms of domain architecture, PDEase spans 97–420 (LDEDYLGQAR…AQWKSLLPRQ (324 aa)). H173 acts as the Proton donor in catalysis. H177, H213, D214, and D323 together coordinate a divalent metal cation. The disordered stretch occupies residues 418–450 (PRQHRSRGSSGSGPDHDHAGQGTESEEQEGDSP). At S426 the chain carries Phosphoserine. A compositionally biased stretch (acidic residues) spans 441-450 (ESEEQEGDSP).

It belongs to the cyclic nucleotide phosphodiesterase family. PDE7 subfamily. It depends on a divalent metal cation as a cofactor. In terms of tissue distribution, highly expressed in brain. Also expressed in heart, liver, skeletal muscle and pancreas.

The catalysed reaction is 3',5'-cyclic AMP + H2O = AMP + H(+). It functions in the pathway purine metabolism; 3',5'-cyclic AMP degradation; AMP from 3',5'-cyclic AMP: step 1/1. Its activity is regulated as follows. Inhibited by dipyridamole, IBMX and SCH 51866. Insensitive to zaprinast, rolipram, and milrinone. Functionally, hydrolyzes the second messenger cAMP, which is a key regulator of many important physiological processes. May be involved in the control of cAMP-mediated neural activity and cAMP metabolism in the brain. The protein is 3',5'-cyclic-AMP phosphodiesterase 7B of Homo sapiens (Human).